The sequence spans 107 residues: Circadian clock oscillator protein KaiB (107 aa).

The protein belongs to the KaiB family. As to quaternary structure, may undergo a major conformational rearrangment; in the free state forms homooligomers. When bound to KaiC switches to a monomeric thioredoxin-fold (KaiB(fs)). The active oscillator complex is probably KaiC(6):KaiB(6).

Functionally, component of the KaiBC clock protein complex, which constitutes the main circadian regulator in cyanobacteria; it may modify the ATPase activity of KaiC. In terms of biological role, does not stimulate dephosphorylation of endogenous KaiC, although it does stimulate dephosphorylation of KiaC from S.elongatus strain PCC 7942. Reduces the ATPase activity of KaiC by about half in vitro, which may be its function in vivo. May be a metamorphic protein which reversibly switches between an inactive tetrameric fold and a rare, thioredoxin-like monomeric fold (KaiB(fs)). KaiB(fs) binds phospho-KaiC, and perhaps clock output effectors. This Prochlorococcus marinus subsp. pastoris (strain CCMP1986 / NIES-2087 / MED4) protein is Circadian clock oscillator protein KaiB.